Reading from the N-terminus, the 83-residue chain is Large ribosomal subunit protein uL23 (83 aa).

It belongs to the universal ribosomal protein uL23 family. In terms of assembly, part of the 50S ribosomal subunit. Contacts protein L29.

Functionally, binds to 23S rRNA. One of the proteins that surrounds the polypeptide exit tunnel on the outside of the ribosome. The protein is Large ribosomal subunit protein uL23 of Thermoplasma volcanium (strain ATCC 51530 / DSM 4299 / JCM 9571 / NBRC 15438 / GSS1).